A 145-amino-acid chain; its full sequence is Putative pre-16S rRNA nuclease (145 aa).

It belongs to the YqgF nuclease family.

Its subcellular location is the cytoplasm. Functionally, could be a nuclease involved in processing of the 5'-end of pre-16S rRNA. The sequence is that of Putative pre-16S rRNA nuclease from Thiobacillus denitrificans (strain ATCC 25259 / T1).